A 208-amino-acid polypeptide reads, in one-letter code: Large ribosomal subunit protein bL25 (208 aa).

The disordered stretch occupies residues 1 to 20 (MANHQIKAQRRKDEGKGASR).

Belongs to the bacterial ribosomal protein bL25 family. CTC subfamily. Part of the 50S ribosomal subunit; part of the 5S rRNA/L5/L18/L25 subcomplex. Contacts the 5S rRNA. Binds to the 5S rRNA independently of L5 and L18.

Functionally, this is one of the proteins that binds to the 5S RNA in the ribosome where it forms part of the central protuberance. The polypeptide is Large ribosomal subunit protein bL25 (Xylella fastidiosa (strain 9a5c)).